The chain runs to 102 residues: Small ribosomal subunit protein uS10 (102 aa).

Belongs to the universal ribosomal protein uS10 family. Part of the 30S ribosomal subunit.

In terms of biological role, involved in the binding of tRNA to the ribosomes. In Parafrankia sp. (strain EAN1pec), this protein is Small ribosomal subunit protein uS10.